Reading from the N-terminus, the 249-residue chain is MIT domain-containing protein 1 (249 aa).

Residues 8–86 (QDSDSTAAVA…KYLDQEKEDG (79 aa)) form the MIT domain. Residues 168 to 231 (SGLEEIKQSL…SLGYYDLDLR (64 aa)) form an important for association with membranes region.

In terms of assembly, homodimer. Interacts (via MIT domain) with CHMP1A, CHMP1B, CHMP2A and IST1.

It is found in the late endosome membrane. Its subcellular location is the midbody. The protein localises to the membrane. Required for efficient abscission at the end of cytokinesis, together with components of the ESCRT-III complex. This Mus musculus (Mouse) protein is MIT domain-containing protein 1 (Mitd1).